A 72-amino-acid polypeptide reads, in one-letter code: MSKVCLLTGKKPKYGNSVSHANNHTRTRFEPNLHTKKIWIEEEKQFVKVKLSAKAMKIIAKTGTAELAKLLK.

The protein belongs to the bacterial ribosomal protein bL28 family.

In Chlorobium chlorochromatii (strain CaD3), this protein is Large ribosomal subunit protein bL28.